A 301-amino-acid chain; its full sequence is Ribosomal RNA small subunit methyltransferase A (301 aa).

S-adenosyl-L-methionine contacts are provided by N23, I25, G50, E72, D97, and N149.

Belongs to the class I-like SAM-binding methyltransferase superfamily. rRNA adenine N(6)-methyltransferase family. RsmA subfamily.

The protein localises to the cytoplasm. It carries out the reaction adenosine(1518)/adenosine(1519) in 16S rRNA + 4 S-adenosyl-L-methionine = N(6)-dimethyladenosine(1518)/N(6)-dimethyladenosine(1519) in 16S rRNA + 4 S-adenosyl-L-homocysteine + 4 H(+). Functionally, specifically dimethylates two adjacent adenosines (A1518 and A1519) in the loop of a conserved hairpin near the 3'-end of 16S rRNA in the 30S particle. May play a critical role in biogenesis of 30S subunits. The protein is Ribosomal RNA small subunit methyltransferase A of Rickettsia peacockii (strain Rustic).